The following is a 1172-amino-acid chain: Serine/threonine-protein kinase Nek10 (1172 aa).

Residues 209 to 251 form an ARM repeat; it reads GAHKTLVNLLGARDTNVLLGSLLALASLAESQECREKISELNI. A coiled-coil region spans residues 481-514; the sequence is YEELVSKLNLLVEDELKQIAENIESINQNKAPLK. The region spanning 519 to 712 is the Protein kinase domain; it reads YAILDHLGSG…SEPYGEKADV (194 aa). ATP is bound by residues 525-533 and K548; that span reads LGSGAFGCV. The active-site Proton acceptor is D655. Disordered stretches follow at residues 855–875 and 898–954; these read SELSESADLPPEGFQASYGKD and TYSE…GSRP. A compositionally biased stretch (polar residues) spans 919–945; it reads PLKESTFNILKRSFSASGGERQSQTRD.

It belongs to the protein kinase superfamily. NEK Ser/Thr protein kinase family. NIMA subfamily. In terms of assembly, interacts with RAF1 and MAP2K1; the interaction is direct with RAF1 and required for ERK1/2-signaling pathway activation in response to UV irradiation. Requires Mg(2+) as cofactor. Expressed in the lung.

It carries out the reaction L-seryl-[protein] + ATP = O-phospho-L-seryl-[protein] + ADP + H(+). The enzyme catalyses L-threonyl-[protein] + ATP = O-phospho-L-threonyl-[protein] + ADP + H(+). Plays a role in the cellular response to UV irradiation. Mediates G2/M cell cycle arrest, MEK autoactivation and ERK1/2-signaling pathway activation in response to UV irradiation. In ciliated cells of airways, it is involved in the regulation of mucociliary transport. The sequence is that of Serine/threonine-protein kinase Nek10 from Homo sapiens (Human).